A 267-amino-acid polypeptide reads, in one-letter code: Acyl-[acyl-carrier-protein]--UDP-N-acetylglucosamine O-acyltransferase (267 aa).

Belongs to the transferase hexapeptide repeat family. LpxA subfamily. As to quaternary structure, homotrimer.

It localises to the cytoplasm. It carries out the reaction a (3R)-hydroxyacyl-[ACP] + UDP-N-acetyl-alpha-D-glucosamine = a UDP-3-O-[(3R)-3-hydroxyacyl]-N-acetyl-alpha-D-glucosamine + holo-[ACP]. The protein operates within glycolipid biosynthesis; lipid IV(A) biosynthesis; lipid IV(A) from (3R)-3-hydroxytetradecanoyl-[acyl-carrier-protein] and UDP-N-acetyl-alpha-D-glucosamine: step 1/6. Functionally, involved in the biosynthesis of lipid A, a phosphorylated glycolipid that anchors the lipopolysaccharide to the outer membrane of the cell. The protein is Acyl-[acyl-carrier-protein]--UDP-N-acetylglucosamine O-acyltransferase of Cupriavidus pinatubonensis (strain JMP 134 / LMG 1197) (Cupriavidus necator (strain JMP 134)).